The chain runs to 63 residues: MNFSRILFFVFTCFVALASVSGAPEPRWKFFKKIERVGQNVRDGLIKAGPAIQVLGAAKALGK.

A signal peptide spans 1–22 (MNFSRILFFVFTCFVALASVSG). A propeptide spans 23–26 (APEP) (removed by a dipeptidylpeptidase). Residue Leu-61 is modified to Leucine amide.

The protein belongs to the cecropin family.

It localises to the secreted. In terms of biological role, has antibacterial activity. This Hyphantria cunea (Fall webworm moth) protein is Hyphancin-3E.